A 299-amino-acid chain; its full sequence is Putative glycylpeptide N-tetradecanoyltransferase (299 aa).

It belongs to the NMT family.

The catalysed reaction is N-terminal glycyl-[protein] + tetradecanoyl-CoA = N-tetradecanoylglycyl-[protein] + CoA + H(+). In terms of biological role, adds a myristoyl group to the N-terminal glycine residue of certain proteins. This is Putative glycylpeptide N-tetradecanoyltransferase from Amsacta moorei entomopoxvirus (AmEPV).